Reading from the N-terminus, the 339-residue chain is Uroporphyrinogen decarboxylase (339 aa).

Substrate-binding positions include 23–27 (RQAGR), aspartate 72, tyrosine 147, threonine 202, and histidine 315.

Belongs to the uroporphyrinogen decarboxylase family. As to quaternary structure, homodimer.

It localises to the cytoplasm. The enzyme catalyses uroporphyrinogen III + 4 H(+) = coproporphyrinogen III + 4 CO2. It participates in porphyrin-containing compound metabolism; protoporphyrin-IX biosynthesis; coproporphyrinogen-III from 5-aminolevulinate: step 4/4. In terms of biological role, catalyzes the decarboxylation of four acetate groups of uroporphyrinogen-III to yield coproporphyrinogen-III. The chain is Uroporphyrinogen decarboxylase from Citrifermentans bemidjiense (strain ATCC BAA-1014 / DSM 16622 / JCM 12645 / Bem) (Geobacter bemidjiensis).